Reading from the N-terminus, the 106-residue chain is uncharacterized protein (106 aa).

This is an uncharacterized protein from Haemophilus influenzae (strain ATCC 51907 / DSM 11121 / KW20 / Rd).